A 932-amino-acid polypeptide reads, in one-letter code: LPS-assembly protein LptD (932 aa).

Residues 1–33 (MALKSPAFRRKFPLLVTGGLLALQPLATSYAVA) form the signal peptide. Residues 54–87 (PVNNLPPRPVHEGAAVSSGTEAASEGETADRPML) are disordered.

It belongs to the LptD family. Component of the lipopolysaccharide transport and assembly complex. Interacts with LptE and LptA.

The protein resides in the cell outer membrane. Functionally, together with LptE, is involved in the assembly of lipopolysaccharide (LPS) at the surface of the outer membrane. The protein is LPS-assembly protein LptD of Pseudomonas putida (strain GB-1).